The chain runs to 490 residues: Hexokinase (490 aa).

Residues 21–466 (QNLLEHIKHF…SGVGAALIAA (446 aa)) enclose the Hexokinase domain. The interval 75–209 (DGKETGTFLA…GLPIKVAALI (135 aa)) is hexokinase small subdomain. The segment at 210–455 (NDTTGTLIAS…DKVTIHAAED (246 aa)) is hexokinase large subdomain.

Belongs to the hexokinase family. As to quaternary structure, monomer.

It catalyses the reaction a D-hexose + ATP = a D-hexose 6-phosphate + ADP + H(+). The catalysed reaction is D-fructose + ATP = D-fructose 6-phosphate + ADP + H(+). The enzyme catalyses D-glucose + ATP = D-glucose 6-phosphate + ADP + H(+). It functions in the pathway carbohydrate metabolism; hexose metabolism. Its pathway is carbohydrate degradation; glycolysis; D-glyceraldehyde 3-phosphate and glycerone phosphate from D-glucose: step 1/4. Functionally, catalyzes the phosphorylation of hexose, such as D-glucose and D-fructose, to hexose 6-phosphate (D-glucose 6-phosphate and D-fructose 6-phosphate, respectively). Mediates the initial step of glycolysis by catalyzing phosphorylation of D-glucose to D-glucose 6-phosphate. The protein is Hexokinase (hxkA) of Emericella nidulans (strain FGSC A4 / ATCC 38163 / CBS 112.46 / NRRL 194 / M139) (Aspergillus nidulans).